The primary structure comprises 267 residues: MSVSQNKLCKRLRRLVGKAIDDYQMIADGDRIMVCLSGGKDSYALLDILLALQKSAPIHFEIIAVNLNQKFPNFPERVLPDYLEKLGVKYDIIEHDTYQVVMEKIPAGKTMCSLCSRLRRGILYRYAEEHGITKIALGHHKIDVIETFFLNLFFTGRLKAMPAKLLSDNKKQIVIRPLVYCDEKDIVKYAKLKAFPIIPSNLCGVQKNMQRTIIKEMLLAWEKDYPQRIEHIFAALTKTVPSHLLDTELFNFAEIEQKAIRFCEESD.

A PP-loop motif motif is present at residues 37-42 (SGGKDS). Residues Cys-112, Cys-115, and Cys-203 each coordinate [4Fe-4S] cluster.

The protein belongs to the TtcA family. In terms of assembly, homodimer. It depends on Mg(2+) as a cofactor. The cofactor is [4Fe-4S] cluster.

The protein localises to the cytoplasm. It catalyses the reaction cytidine(32) in tRNA + S-sulfanyl-L-cysteinyl-[cysteine desulfurase] + AH2 + ATP = 2-thiocytidine(32) in tRNA + L-cysteinyl-[cysteine desulfurase] + A + AMP + diphosphate + H(+). The protein operates within tRNA modification. In terms of biological role, catalyzes the ATP-dependent 2-thiolation of cytidine in position 32 of tRNA, to form 2-thiocytidine (s(2)C32). The sulfur atoms are provided by the cysteine/cysteine desulfurase (IscS) system. This chain is tRNA-cytidine(32) 2-sulfurtransferase, found in Dichelobacter nodosus (strain VCS1703A).